Consider the following 234-residue polypeptide: Large ribosomal subunit protein uL1 (234 aa).

It belongs to the universal ribosomal protein uL1 family. Part of the 50S ribosomal subunit.

Its function is as follows. Binds directly to 23S rRNA. The L1 stalk is quite mobile in the ribosome, and is involved in E site tRNA release. In terms of biological role, protein L1 is also a translational repressor protein, it controls the translation of the L11 operon by binding to its mRNA. This is Large ribosomal subunit protein uL1 from Maridesulfovibrio salexigens (strain ATCC 14822 / DSM 2638 / NCIMB 8403 / VKM B-1763) (Desulfovibrio salexigens).